Reading from the N-terminus, the 151-residue chain is uncharacterized protein (151 aa).

This is an uncharacterized protein from Rhizobium meliloti (strain 1021) (Ensifer meliloti).